We begin with the raw amino-acid sequence, 426 residues long: MKKDSVIFDLIEKEHQRQLKGIELIASENFVSEQVMQAMGSCMTNKYAEGYPGKRYYGGCEVVDQSEQIAIDRIKQLYGAEWANVQPHSGAQANMAVLLACLEAGDTFMGLNLEHGGHLSHGSLVNSSGILYRPIGYNLSEETGMVDYDHMEKMAIEHKPKLIIGGGSAYSREWDYKRMREIADKVGALLMIDMAHPAGLIAAGLLENPVKYAHIVTSTTHKTLRGPRGGIILMGKDFDNPWGKKTPKGEIKKMSALLDSAVFPGVQGGPLEHVIAAKAVAFGEALDPSFKEYQTQVKKNAAVLAQAFMDKGYKVISGGTDNHSMLIDLRPKFPELTGKVAEKALVAADITVNKNMVPFDSRSAFQTSGFRVGTPAITTRGVKEDKMGYIVELIDRVLSAPEDEAVIASVRTEVNRMMADYPLFAW.

Residues Leu-113 and 117–119 contribute to the (6S)-5,6,7,8-tetrahydrofolate site; that span reads GHL. Lys-222 is subject to N6-(pyridoxal phosphate)lysine. 363 to 365 contacts (6S)-5,6,7,8-tetrahydrofolate; the sequence is SAF.

The protein belongs to the SHMT family. Homodimer. Pyridoxal 5'-phosphate is required as a cofactor.

The protein localises to the cytoplasm. It catalyses the reaction (6R)-5,10-methylene-5,6,7,8-tetrahydrofolate + glycine + H2O = (6S)-5,6,7,8-tetrahydrofolate + L-serine. Its pathway is one-carbon metabolism; tetrahydrofolate interconversion. It participates in amino-acid biosynthesis; glycine biosynthesis; glycine from L-serine: step 1/1. Functionally, catalyzes the reversible interconversion of serine and glycine with tetrahydrofolate (THF) serving as the one-carbon carrier. This reaction serves as the major source of one-carbon groups required for the biosynthesis of purines, thymidylate, methionine, and other important biomolecules. Also exhibits THF-independent aldolase activity toward beta-hydroxyamino acids, producing glycine and aldehydes, via a retro-aldol mechanism. This chain is Serine hydroxymethyltransferase, found in Porphyromonas gingivalis (strain ATCC 33277 / DSM 20709 / CIP 103683 / JCM 12257 / NCTC 11834 / 2561).